Here is a 210-residue protein sequence, read N- to C-terminus: MSLVKPLTARQQEVYNFLKHYIETTGMPPTRAEISRELGFRSPNAAEEHLKALARKGAVEILAGTSRGIRLLLDAANDEPEGLPLIGQVAAGEPILAEQHIEGTYRVDPDMFKPQADFLLKVNGQSMKNIGILDGDLLAVHSTKDVRNGQVIVARIEDEVTVKRLERKGDVIYLHAENEEFAPIVVNLREQERFEIEGIAVGIIRNNAWM.

Positions 31 to 51 form a DNA-binding region, H-T-H motif; that stretch reads RAEISRELGFRSPNAAEEHLK. Active-site for autocatalytic cleavage activity residues include serine 126 and lysine 163.

Belongs to the peptidase S24 family. In terms of assembly, homodimer.

It carries out the reaction Hydrolysis of Ala-|-Gly bond in repressor LexA.. Represses a number of genes involved in the response to DNA damage (SOS response), including recA and lexA. In the presence of single-stranded DNA, RecA interacts with LexA causing an autocatalytic cleavage which disrupts the DNA-binding part of LexA, leading to derepression of the SOS regulon and eventually DNA repair. In Actinobacillus succinogenes (strain ATCC 55618 / DSM 22257 / CCUG 43843 / 130Z), this protein is LexA repressor.